A 185-amino-acid chain; its full sequence is Ribosome-recycling factor (185 aa).

The protein belongs to the RRF family.

The protein localises to the cytoplasm. In terms of biological role, responsible for the release of ribosomes from messenger RNA at the termination of protein biosynthesis. May increase the efficiency of translation by recycling ribosomes from one round of translation to another. The chain is Ribosome-recycling factor from Pectobacterium carotovorum subsp. carotovorum (strain PC1).